A 90-amino-acid polypeptide reads, in one-letter code: Probable Fe(2+)-trafficking protein (90 aa).

It belongs to the Fe(2+)-trafficking protein family.

Functionally, could be a mediator in iron transactions between iron acquisition and iron-requiring processes, such as synthesis and/or repair of Fe-S clusters in biosynthetic enzymes. This is Probable Fe(2+)-trafficking protein from Bordetella bronchiseptica (strain ATCC BAA-588 / NCTC 13252 / RB50) (Alcaligenes bronchisepticus).